The chain runs to 545 residues: Glucose-6-phosphate isomerase (545 aa).

Glu351 (proton donor) is an active-site residue. Active-site residues include His382 and Lys510.

This sequence belongs to the GPI family.

Its subcellular location is the cytoplasm. It carries out the reaction alpha-D-glucose 6-phosphate = beta-D-fructose 6-phosphate. It participates in carbohydrate biosynthesis; gluconeogenesis. The protein operates within carbohydrate degradation; glycolysis; D-glyceraldehyde 3-phosphate and glycerone phosphate from D-glucose: step 2/4. In terms of biological role, catalyzes the reversible isomerization of glucose-6-phosphate to fructose-6-phosphate. This Shewanella woodyi (strain ATCC 51908 / MS32) protein is Glucose-6-phosphate isomerase.